The following is a 292-amino-acid chain: Elongation factor Ts (292 aa).

The tract at residues 80-83 (TDFV) is involved in Mg(2+) ion dislocation from EF-Tu.

The protein belongs to the EF-Ts family.

It localises to the cytoplasm. Its function is as follows. Associates with the EF-Tu.GDP complex and induces the exchange of GDP to GTP. It remains bound to the aminoacyl-tRNA.EF-Tu.GTP complex up to the GTP hydrolysis stage on the ribosome. This is Elongation factor Ts from Cupriavidus taiwanensis (strain DSM 17343 / BCRC 17206 / CCUG 44338 / CIP 107171 / LMG 19424 / R1) (Ralstonia taiwanensis (strain LMG 19424)).